The following is a 115-amino-acid chain: uncharacterized protein (115 aa).

Residues 9 to 30 (EGLRERGASGKNEQKKKKKEKI) form a disordered region.

This is an uncharacterized protein from Saccharomyces cerevisiae (strain ATCC 204508 / S288c) (Baker's yeast).